The primary structure comprises 784 residues: Cadherin-5 (784 aa).

The first 24 residues, 1–24 (MQRLTELATALGAFLGLLAVAAMA), serve as a signal peptide directing secretion. A propeptide spanning residues 25–45 (GPNFPQIDTPNMLPAHHRQKR) is cleaved from the precursor. Cadherin domains are found at residues 46–149 (DWIW…WPVF), 150–256 (SHQV…FPVF), 257–371 (TQST…PPVF), 372–476 (QRHF…DNPP), and 477–593 (EFAQ…MAAQ). Residues 46–599 (DWIWNQMHID…MAAQAGVSIQ (554 aa)) are Extracellular-facing. Glu-56 and Glu-57 together coordinate Ca(2+). Asn-59 is a glycosylation site (N-linked (GlcNAc...) asparagine). Positions 107, 109, 141, 142, 143, 144, and 145 each coordinate Ca(2+). The N-linked (GlcNAc...) asparagine glycan is linked to Asn-155. Ca(2+)-binding residues include Asp-175, Asp-177, His-184, and Asp-229. Residues Asn-441, Asn-523, and Asn-535 are each glycosylated (N-linked (GlcNAc...) asparagine). The helical transmembrane segment at 600 to 620 (ALVAIFLCILTITVITLLIIL) threads the bilayer. Residues 621–660 (RRRIRKQAHAHSKSALEIHEQLVTYDEEGGGEMDTTSYDV) are required for interaction with PALS1. At 621–784 (RRRIRKQAHA…GSDPQEELII (164 aa)) the chain is on the cytoplasmic side.

As to quaternary structure, part of a complex composed of AMOTL2, MAGI1 and CDH5, within the complex AMOTL2 acts as a scaffold protein for the interaction of MAGI1 with CDH5. The complex is required for coupling actin fibers to cell junctions in endothelial cells. Within the complex AMOTL2 (via its N-terminus) interacts with CDH5. Interacts (via cadherin 5 domain) with PTPRB. Interacts with TRPC4. Interacts with KRIT1. Interacts with PARD3. Interacts with RTN4 (isoform B). Interacts with PALS1; the interaction promotes PALS1 localization to cell junctions and is required for CDH5-mediated vascular lumen formation and endothelial cell polarity. Interacts with CTNND1/p120-catenin; the interaction controls CADH5 endocytosis. Post-translationally, phosphorylated on tyrosine residues by KDR/VEGFR-2. Dephosphorylated by PTPRB. O-glycosylated. Expressed in postnatal endothelial cells of the retinal vascular plexus (at protein level).

The protein localises to the cell junction. It localises to the adherens junction. Its subcellular location is the cell membrane. The protein resides in the cytoplasm. Cadherins are calcium-dependent cell adhesion proteins. They preferentially interact with themselves in a homophilic manner in connecting cells; cadherins may thus contribute to the sorting of heterogeneous cell types. This cadherin may play an important role in endothelial cell biology through control of the cohesion and organization of the intercellular junctions. It associates with alpha-catenin forming a link to the cytoskeleton. Plays a role in coupling actin fibers to cell junctions in endothelial cells, via acting as a cell junctional complex anchor for AMOTL2 and MAGI1. Acts in concert with KRIT1 and PALS1 to establish and maintain correct endothelial cell polarity and vascular lumen. These effects are mediated by recruitment and activation of the Par polarity complex and RAP1B. Required for activation of PRKCZ and for localization of phosphorylated PRKCZ, PARD3, TIAM1 and RAP1B to the cell junction. Associates with CTNND1/p120-catenin to control CADH5 endocytosis. The chain is Cadherin-5 from Mus musculus (Mouse).